A 130-amino-acid chain; its full sequence is UPF0225 protein DR_0483 (130 aa).

This sequence belongs to the UPF0225 family.

This is UPF0225 protein DR_0483 from Deinococcus radiodurans (strain ATCC 13939 / DSM 20539 / JCM 16871 / CCUG 27074 / LMG 4051 / NBRC 15346 / NCIMB 9279 / VKM B-1422 / R1).